Consider the following 244-residue polypeptide: 5-oxoprolinase subunit A (244 aa).

Belongs to the LamB/PxpA family. Forms a complex composed of PxpA, PxpB and PxpC.

The enzyme catalyses 5-oxo-L-proline + ATP + 2 H2O = L-glutamate + ADP + phosphate + H(+). In terms of biological role, catalyzes the cleavage of 5-oxoproline to form L-glutamate coupled to the hydrolysis of ATP to ADP and inorganic phosphate. This Shigella flexneri serotype 5b (strain 8401) protein is 5-oxoprolinase subunit A.